The following is a 152-amino-acid chain: Transcriptional regulator MraZ (152 aa).

2 SpoVT-AbrB domains span residues 5 to 52 (ASAI…PIHE) and 81 to 124 (AHEV…DEQA).

The protein belongs to the MraZ family. In terms of assembly, forms oligomers.

Its subcellular location is the cytoplasm. The protein resides in the nucleoid. The sequence is that of Transcriptional regulator MraZ from Shewanella sp. (strain ANA-3).